The following is a 133-amino-acid chain: Large ribosomal subunit protein bL20 (133 aa).

This sequence belongs to the bacterial ribosomal protein bL20 family.

Functionally, binds directly to 23S ribosomal RNA and is necessary for the in vitro assembly process of the 50S ribosomal subunit. It is not involved in the protein synthesizing functions of that subunit. The protein is Large ribosomal subunit protein bL20 of Chelativorans sp. (strain BNC1).